The primary structure comprises 163 residues: Staphylokinase (163 aa).

The N-terminal stretch at 1-27 (MLKRSLLFLTVLLLLFSFSSITNEVSA) is a signal peptide.

This sequence belongs to the staphylokinase family.

It localises to the secreted. In terms of biological role, potent plasminogen activator that converts plasminogen into plasmin. It forms a 1:1 complex with plasmin, which in turn activates other plasminogen molecules. The protein is Staphylokinase (sak) of Staphylococcus aureus (Bacteriophage P42D).